Here is a 236-residue protein sequence, read N- to C-terminus: MDFSQGLTPARLIRRYKRFLADVEIEDGTIITVYCPNTGTMRTCSTPNSPVMLSISDNPKRKYAHTLEMIFENHTWIGVNTGRTNSIVAKAILNGSIAEFSGATKVQREITVSKGSRLDLLVDHADQKSYIEIKNCSMAENRRAMFPDAVTARGTKHLRELIKLVKQGENAYIFFLIQREDADSFSPATHIDPLYANTLKEALQQGVQALAYQASVILRALPIILNGSNSPHLPQR.

It belongs to the SfsA family.

In Desulfotalea psychrophila (strain LSv54 / DSM 12343), this protein is Sugar fermentation stimulation protein homolog.